We begin with the raw amino-acid sequence, 250 residues long: MTETILAAQIEVGEHHTATWLGMTVNTDTVLSTAIAGLIVIALAFYLRAKVTSTDVPGGVQLFFEAITIQMRNQVESAIGMRIAPFVLPLAVTIFVFILISNWLAVLPVQYTDKHGHTTELLKSAAADINYVLALALFVFVCYHTAGIWRRGIVGHPIKLLKGHVTLLAPINLVEEVAKPISLSLRLFGNIFAGGILVALIALFPPYIMWAPNAIWKAFDLFVGAIQAFIFALLTILYFSQAMELEEEHH.

A run of 5 helical transmembrane segments spans residues 27–47 (TDTV…AFYL), 86–106 (FVLP…WLAV), 129–149 (INYV…AGIW), 191–211 (IFAG…IMWA), and 219–239 (FDLF…ILYF).

It belongs to the ATPase A chain family. F-type ATPases have 2 components, CF(1) - the catalytic core - and CF(0) - the membrane proton channel. CF(1) has five subunits: alpha(3), beta(3), gamma(1), delta(1), epsilon(1). CF(0) has three main subunits: a(1), b(2) and c(9-12). The alpha and beta chains form an alternating ring which encloses part of the gamma chain. CF(1) is attached to CF(0) by a central stalk formed by the gamma and epsilon chains, while a peripheral stalk is formed by the delta and b chains.

The protein resides in the cell membrane. Functionally, key component of the proton channel; it plays a direct role in the translocation of protons across the membrane. The chain is ATP synthase subunit a from Mycobacterium bovis (strain ATCC BAA-935 / AF2122/97).